The following is a 21-amino-acid chain: Magainin-B1 (21 aa).

In terms of tissue distribution, expressed by the skin glands.

The protein localises to the secreted. Has no antimicrobial activity against tested bacteria. This Xenopus borealis (Kenyan clawed frog) protein is Magainin-B1.